Here is a 138-residue protein sequence, read N- to C-terminus: Regulator of ribonuclease activity B (138 aa).

Positions Trp111–His138 are disordered. The segment covering Pro118–His138 has biased composition (acidic residues).

The protein belongs to the RraB family. As to quaternary structure, interacts with the C-terminal region of Rne.

It is found in the cytoplasm. Its function is as follows. Globally modulates RNA abundance by binding to RNase E (Rne) and regulating its endonucleolytic activity. Can modulate Rne action in a substrate-dependent manner by altering the composition of the degradosome. This Salmonella typhi protein is Regulator of ribonuclease activity B.